The primary structure comprises 217 residues: Thymidylate kinase (217 aa).

7-14 (GIEGTGKT) serves as a coordination point for ATP.

It belongs to the thymidylate kinase family.

It catalyses the reaction dTMP + ATP = dTDP + ADP. Functionally, phosphorylation of dTMP to form dTDP in both de novo and salvage pathways of dTTP synthesis. The chain is Thymidylate kinase from Maridesulfovibrio salexigens (strain ATCC 14822 / DSM 2638 / NCIMB 8403 / VKM B-1763) (Desulfovibrio salexigens).